The sequence spans 548 residues: Sterol esterase TGL1 (548 aa).

Position 1 is an N-acetylmethionine; partial (Met1). Over 1-13 (MYFPFLGRLSITD) the chain is Lumenal. A helical membrane pass occupies residues 14–34 (YIIVVLVYIESIISSVLKLIP). At 35–548 (QPMINLFEWL…TTALDALNKE (514 aa)) the chain is on the cytoplasmic side. The AB hydrolase-1 domain maps to 107-402 (VVYLHHGLLM…NYEHLDLIWG (296 aa)). A GXSXG motif is present at residues 199–203 (GFSQG). Residue Ser201 is the Nucleophile of the active site. Lys246 is covalently cross-linked (Glycyl lysine isopeptide (Lys-Gly) (interchain with G-Cter in ubiquitin)). Active-site charge relay system residues include Asp369 and His396. Disordered regions lie at residues 449-477 (TTHP…EADE) and 496-516 (IDED…HKEQ). Residues Ser462 and Ser466 each carry the phosphoserine modification. A compositionally biased stretch (basic and acidic residues) spans 502 to 516 (NEHQDDTEDQIHKEQ). Phosphoserine occurs at positions 521 and 538. A disordered region spans residues 528-548 (KDLRQLDANSSTTALDALNKE). Thr539 bears the Phosphothreonine mark.

It belongs to the AB hydrolase superfamily. Post-translationally, not N-glycosylated.

It is found in the lipid droplet. It localises to the membrane. It catalyses the reaction a sterol ester + H2O = a sterol + a fatty acid + H(+). Mediates the hydrolysis of steryl esters (SE). Preferentially hydrolyzes ergosteryl and zymosteryl esters. Required for mobilization of SEs from lipid particles/droplets, thereby playing a central role in lipid metabolism and sterol homeostasis. Sterol intermediates stored in SE and set free by SE hydrolases are recycled to the sterol biosynthetic pathway and converted to the final product, ergosterol, in the endoplasmic reticulum. Also has weak lipase activity toward triglycerides at neutral pH, however, the physiological relevance of this activity is unclear. This chain is Sterol esterase TGL1 (TGL1), found in Saccharomyces cerevisiae (strain ATCC 204508 / S288c) (Baker's yeast).